The sequence spans 353 residues: Mitogen-activated protein kinase mpkB (353 aa).

A Protein kinase domain is found at 21-309 (YEIQDVIGEG…VEEALRHPYL (289 aa)). ATP-binding positions include 27–35 (IGEGAYGVV) and Lys50. The Proton acceptor role is filled by Asp145.

Belongs to the protein kinase superfamily. Ser/Thr protein kinase family. MAP kinase subfamily. The cofactor is Mg(2+).

It is found in the nucleus. The enzyme catalyses L-seryl-[protein] + ATP = O-phospho-L-seryl-[protein] + ADP + H(+). It catalyses the reaction L-threonyl-[protein] + ATP = O-phospho-L-threonyl-[protein] + ADP + H(+). With respect to regulation, activated by threonine and tyrosine phosphorylation. Mitogen-activated protein kinase (MAPK) that plays a role in conidiation and regulation of secondary metabolite biosynthesis. Acts as a repressor of dihydroxynaphthalene (DHN)-melanin production. The sequence is that of Mitogen-activated protein kinase mpkB from Aspergillus fumigatus (strain CBS 144.89 / FGSC A1163 / CEA10) (Neosartorya fumigata).